The sequence spans 123 residues: MALKRCCSYSGWELQTRDNQFRCIHNFLFIRYLLSYGETVAELTFRCKYVVFTPQLACLCFPAVRANDPRSYGCALEFYPFRVLVEWYFRWTSALFSIYLLEQHPTLCYDLTCRGSGHGKDAQ.

This is an uncharacterized protein from Pasteurella multocida (strain Pm70).